Consider the following 243-residue polypeptide: Pyridoxine 5'-phosphate synthase (243 aa).

Position 9 (Asn-9) interacts with 3-amino-2-oxopropyl phosphate. 1-deoxy-D-xylulose 5-phosphate is bound at residue 11–12 (DH). Arg-20 provides a ligand contact to 3-amino-2-oxopropyl phosphate. His-45 functions as the Proton acceptor in the catalytic mechanism. Positions 47 and 52 each coordinate 1-deoxy-D-xylulose 5-phosphate. The active-site Proton acceptor is Glu-72. A 1-deoxy-D-xylulose 5-phosphate-binding site is contributed by Thr-102. The Proton donor role is filled by His-193. Residues Gly-194 and 215-216 (GH) each bind 3-amino-2-oxopropyl phosphate.

It belongs to the PNP synthase family. As to quaternary structure, homooctamer; tetramer of dimers.

The protein localises to the cytoplasm. The enzyme catalyses 3-amino-2-oxopropyl phosphate + 1-deoxy-D-xylulose 5-phosphate = pyridoxine 5'-phosphate + phosphate + 2 H2O + H(+). It functions in the pathway cofactor biosynthesis; pyridoxine 5'-phosphate biosynthesis; pyridoxine 5'-phosphate from D-erythrose 4-phosphate: step 5/5. In terms of biological role, catalyzes the complicated ring closure reaction between the two acyclic compounds 1-deoxy-D-xylulose-5-phosphate (DXP) and 3-amino-2-oxopropyl phosphate (1-amino-acetone-3-phosphate or AAP) to form pyridoxine 5'-phosphate (PNP) and inorganic phosphate. In Photobacterium profundum (strain SS9), this protein is Pyridoxine 5'-phosphate synthase.